We begin with the raw amino-acid sequence, 192 residues long: Signal peptidase complex catalytic subunit sec11 (192 aa).

Over 1 to 18 (MLSFLSSNLSSTRQSLAQ) the chain is Cytoplasmic. A helical; Signal-anchor for type II membrane protein transmembrane segment spans residues 19 to 39 (VLNFALVLSTAFMLWKGLSVF). Over 40–192 (TASSSPIVVV…GLMVILQREQ (153 aa)) the chain is Lumenal. Active-site charge relay system residues include serine 53, histidine 92, and aspartate 133. Residues 177-188 (VLLGIMGLMVIL) form a C-terminal short (CTS) helix region.

Belongs to the peptidase S26B family. Component of the signal peptidase complex (SPC) composed of a catalytic subunit SEC11 and three accessory subunits SPC1, SPC2 and SPC3. The complex induces a local thinning of the ER membrane which is used to measure the length of the signal peptide (SP) h-region of protein substrates. This ensures the selectivity of the complex towards h-regions shorter than 18-20 amino acids. SPC associates with the translocon complex.

The protein resides in the endoplasmic reticulum membrane. It catalyses the reaction Cleavage of hydrophobic, N-terminal signal or leader sequences from secreted and periplasmic proteins.. In terms of biological role, catalytic component of the signal peptidase complex (SPC) which catalyzes the cleavage of N-terminal signal sequences from nascent proteins as they are translocated into the lumen of the endoplasmic reticulum. Specifically cleaves N-terminal signal peptides that contain a hydrophobic alpha-helix (h-region) shorter than 18-20 amino acids. This chain is Signal peptidase complex catalytic subunit sec11 (sec11), found in Aspergillus clavatus (strain ATCC 1007 / CBS 513.65 / DSM 816 / NCTC 3887 / NRRL 1 / QM 1276 / 107).